A 603-amino-acid polypeptide reads, in one-letter code: Adenine deaminase 1 (603 aa).

It belongs to the metallo-dependent hydrolases superfamily. Adenine deaminase family. It depends on Mn(2+) as a cofactor.

It catalyses the reaction adenine + H2O + H(+) = hypoxanthine + NH4(+). The chain is Adenine deaminase 1 from Carboxydothermus hydrogenoformans (strain ATCC BAA-161 / DSM 6008 / Z-2901).